Here is a 202-residue protein sequence, read N- to C-terminus: Imidazoleglycerol-phosphate dehydratase (202 aa).

The protein belongs to the imidazoleglycerol-phosphate dehydratase family. As to quaternary structure, homotrimer.

It carries out the reaction D-erythro-1-(imidazol-4-yl)glycerol 3-phosphate = 3-(imidazol-4-yl)-2-oxopropyl phosphate + H2O. The protein operates within amino-acid biosynthesis; L-histidine biosynthesis; L-histidine from 5-phospho-alpha-D-ribose 1-diphosphate: step 6/9. This is Imidazoleglycerol-phosphate dehydratase (HIS3) from Cryptococcus neoformans var. neoformans serotype D (strain B-3501A) (Filobasidiella neoformans).